The chain runs to 146 residues: Large ribosomal subunit protein uL15 (146 aa).

Residues 1–51 form a disordered region; sequence MKLHELQPAPGSRKKAVRVGRGIGSGNGKTSGRGQKGQNARSGGGVRLGFE. Composition is skewed to gly residues over residues 21 to 35 and 42 to 51; these read RGIGSGNGKTSGRGQ and SGGGVRLGFE.

It belongs to the universal ribosomal protein uL15 family. In terms of assembly, part of the 50S ribosomal subunit.

Functionally, binds to the 23S rRNA. The sequence is that of Large ribosomal subunit protein uL15 from Geobacillus kaustophilus (strain HTA426).